The chain runs to 261 residues: CD40 ligand (261 aa).

Residues 1–22 (MIETYNQPVPRSAATGPPVSMK) are Cytoplasmic-facing. Residues 23–43 (IFMYLLTVFLITQMIGSALFA) form a helical; Signal-anchor for type II membrane protein membrane-spanning segment. The Extracellular segment spans residues 44–261 (VYLHRRLDKI…GFTSFGLLKL (218 aa)). Residues 122 to 261 (IAAHVISEAS…GFTSFGLLKL (140 aa)) form the THD domain. A disulfide bridge links C178 with C218. N240 carries an N-linked (GlcNAc...) asparagine glycan.

Belongs to the tumor necrosis factor family. Homotrimer. Interacts with CD28. CD40 ligand, soluble form: Exists as either a monomer or a homotrimer. Forms a ternary complex between CD40 and integrins for CD40-CD40LG signaling. In terms of processing, the soluble form derives from the membrane form by proteolytic processing.

It localises to the cell membrane. Its subcellular location is the cell surface. It is found in the secreted. In terms of biological role, cytokine that acts as a ligand to CD40/TNFRSF5. Costimulates T-cell proliferation and cytokine production. Its cross-linking on T-cells generates a costimulatory signal which enhances the production of IL4 and IL10 in conjunction with the TCR/CD3 ligation and CD28 costimulation. Induces the activation of NF-kappa-B. Induces the activation of kinases MAPK8 and PAK2 in T-cells. Mediates B-cell proliferation in the absence of co-stimulus as well as IgE production in the presence of IL4. Involved in immunoglobulin class switching. Acts as a ligand for integrins, specifically ITGA5:ITGB1 and ITGAV:ITGB3; both integrins and the CD40 receptor are required for activation of CD40-CD40LG signaling, which have cell-type dependent effects, such as B-cell activation, NF-kappa-B signaling and anti-apoptotic signaling. This chain is CD40 ligand (CD40LG), found in Callithrix jacchus (White-tufted-ear marmoset).